A 342-amino-acid polypeptide reads, in one-letter code: C-X-C chemokine receptor type 6 (342 aa).

At 1 to 32 (MAEHDYHEDYGFNSFNDSSQEEHQDFLQFSKV) the chain is on the extracellular side. N-linked (GlcNAc...) asparagine glycosylation is present at Asn16. Residues 33–59 (FLPCMYLVVFVCGLVGNSLVLVISIFY) form a helical membrane-spanning segment. Over 60 to 68 (HKLQSLTDV) the chain is Cytoplasmic. Residues 69–89 (FLVNLPLADLVFVCTLPFWAY) form a helical membrane-spanning segment. Topologically, residues 90-103 (AGIHEWVFGQVMCK) are extracellular. Cys102 and Cys180 form a disulfide bridge. The helical transmembrane segment at 104–125 (SLLGIYTINFYTSMLILTCITV) threads the bilayer. Topologically, residues 126-143 (DRFIVVVKATKAYNQQAK) are cytoplasmic. Residues 144–164 (RMTWGKVTSLLIWVISLLVSL) traverse the membrane as a helical segment. At 165-187 (PQIIYGNVFNLDKLICGYHDEAI) the chain is on the extracellular side. A helical membrane pass occupies residues 188-215 (STVVLATQMTLGFFLPLLTMIVCYSVII). Over 216–231 (KTLLHAGGFQKHRSLK) the chain is Cytoplasmic. Residues 232-259 (IIFLVMAVFLLTQMPFNLMKLIRSTHWE) traverse the membrane as a helical segment. Over 260–275 (YYAMTSFHYTIMVTEA) the chain is Extracellular. The chain crosses the membrane as a helical span at residues 276–293 (IAYLRACLNPVLYAFVSL). Residues 294 to 342 (KFRKNFWKLVKDIGCLPYLGVSHQWKSSEDNSKTFSASHNVEATSMFQL) lie on the Cytoplasmic side of the membrane.

It belongs to the G-protein coupled receptor 1 family.

The protein resides in the cell membrane. Receptor for the C-X-C chemokine CXCL16. Used as a coreceptor by SIVs and by strains of HIV-2 and m-tropic HIV-1. In Pan troglodytes (Chimpanzee), this protein is C-X-C chemokine receptor type 6 (CXCR6).